The primary structure comprises 291 residues: N-acetylmannosamine kinase (291 aa).

ATP-binding positions include 5 to 12 and 132 to 139; these read AIDIGGTK and GVGGGVVC. The Zn(2+) site is built by histidine 156, cysteine 166, cysteine 168, and cysteine 173.

The protein belongs to the ROK (NagC/XylR) family. NanK subfamily. Homodimer.

It carries out the reaction an N-acyl-D-mannosamine + ATP = an N-acyl-D-mannosamine 6-phosphate + ADP + H(+). Its pathway is amino-sugar metabolism; N-acetylneuraminate degradation; D-fructose 6-phosphate from N-acetylneuraminate: step 2/5. Its function is as follows. Catalyzes the phosphorylation of N-acetylmannosamine (ManNAc) to ManNAc-6-P. This Salmonella typhi protein is N-acetylmannosamine kinase.